The chain runs to 75 residues: Small ribosomal subunit protein bS18 (75 aa).

This sequence belongs to the bacterial ribosomal protein bS18 family. As to quaternary structure, part of the 30S ribosomal subunit. Forms a tight heterodimer with protein bS6.

Functionally, binds as a heterodimer with protein bS6 to the central domain of the 16S rRNA, where it helps stabilize the platform of the 30S subunit. In Acinetobacter baumannii (strain AB307-0294), this protein is Small ribosomal subunit protein bS18.